The sequence spans 686 residues: Probable ferric reductase transmembrane component (686 aa).

A run of 7 helical transmembrane segments spans residues 23 to 43 (LSGW…VPVV), 79 to 99 (TLWL…VGSA), 111 to 131 (VAAA…PLPY), 147 to 167 (VVVL…ATSG), 178 to 198 (WMGA…LPAV), 205 to 225 (TFYY…HVHS), and 256 to 276 (VTVV…ADLV). In terms of domain architecture, Ferric oxidoreductase spans 108–666 (LGRVAAAFMP…LAAGPQALVE (559 aa)). Residue 308 to 314 (HPFTVAS) participates in FAD binding. Residues 392–412 (LMVVGGSAISFGLPFLRILNF) form a helical membrane-spanning segment. 431–439 (ILSQFRSNF) is an NAD(+) binding site. Residues asparagine 506 and asparagine 644 are each glycosylated (N-linked (GlcNAc...) asparagine).

FAD is required as a cofactor.

The protein localises to the membrane. It catalyses the reaction 2 a Fe(II)-siderophore + NAD(+) + H(+) = 2 a Fe(III)-siderophore + NADH. In terms of biological role, is required for the uptake of Fe(3+) ions. May participate in the transport of electrons from cytoplasm to an extracellular substrate (Fe(3+) ion) via FAD and heme intermediates. Involved in iron homeostasis. In Eremothecium gossypii (strain ATCC 10895 / CBS 109.51 / FGSC 9923 / NRRL Y-1056) (Yeast), this protein is Probable ferric reductase transmembrane component (FRE8).